A 633-amino-acid polypeptide reads, in one-letter code: DNA topoisomerase 1 (633 aa).

A Toprim domain is found at 6 to 115 (KKYIVVESPA…KNRIVFSEIT (110 aa)). The Mg(2+) site is built by E12 and D84. The region spanning 130 to 543 (DMKKVRAQLA…EFYESFSSVF (414 aa)) is the Topo IA-type catalytic domain. The segment at 164–169 (SAGRVQ) is interaction with DNA. The active-site O-(5'-phospho-DNA)-tyrosine intermediate is Y288. 2 disulfide bridges follow: C559–C578 and C561–C580. Residues 559 to 580 (CSCGKEMRLSFGKYGFYLKCEC) form a C4-type zinc finger. The interval 601 to 633 (LGRKDSESGSPDGRSVEGKGNLSEKRRKGKKGS) is disordered.

This sequence belongs to the type IA topoisomerase family. Monomer. The cofactor is Mg(2+).

The catalysed reaction is ATP-independent breakage of single-stranded DNA, followed by passage and rejoining.. In terms of biological role, releases the supercoiling and torsional tension of DNA, which is introduced during the DNA replication and transcription, by transiently cleaving and rejoining one strand of the DNA duplex. Introduces a single-strand break via transesterification at a target site in duplex DNA. The scissile phosphodiester is attacked by the catalytic tyrosine of the enzyme, resulting in the formation of a DNA-(5'-phosphotyrosyl)-enzyme intermediate and the expulsion of a 3'-OH DNA strand. The free DNA strand then undergoes passage around the unbroken strand, thus removing DNA supercoils. Finally, in the religation step, the DNA 3'-OH attacks the covalent intermediate to expel the active-site tyrosine and restore the DNA phosphodiester backbone. The sequence is that of DNA topoisomerase 1 from Thermotoga maritima (strain ATCC 43589 / DSM 3109 / JCM 10099 / NBRC 100826 / MSB8).